The following is a 225-amino-acid chain: Germin-like protein 3-1 (225 aa).

An N-terminal signal peptide occupies residues 1-22 (MRAAVAHRILLSLALFAVLCRC). A disulfide bridge links Cys-31 with Cys-51. Positions 65–216 (SALSRATNPA…AFKITGQDVQ (152 aa)) constitute a Cupin type-1 domain. Residue Asn-81 is glycosylated (N-linked (GlcNAc...) asparagine). 4 residues coordinate Mn(2+): His-115, His-117, Glu-122, and His-161.

This sequence belongs to the germin family. As to quaternary structure, oligomer (believed to be a pentamer but probably hexamer).

The protein localises to the secreted. It is found in the extracellular space. The protein resides in the apoplast. Its function is as follows. May play a role in plant defense. Probably has no oxalate oxidase activity even if the active site is conserved. The protein is Germin-like protein 3-1 of Oryza sativa subsp. japonica (Rice).